The primary structure comprises 94 residues: Co-chaperonin GroES (94 aa).

The protein belongs to the GroES chaperonin family. Heptamer of 7 subunits arranged in a ring. Interacts with the chaperonin GroEL.

The protein localises to the cytoplasm. Together with the chaperonin GroEL, plays an essential role in assisting protein folding. The GroEL-GroES system forms a nano-cage that allows encapsulation of the non-native substrate proteins and provides a physical environment optimized to promote and accelerate protein folding. GroES binds to the apical surface of the GroEL ring, thereby capping the opening of the GroEL channel. The protein is Co-chaperonin GroES of Bacillus sp. (strain PS3).